We begin with the raw amino-acid sequence, 114 residues long: Adapter SH3BGRL (114 aa).

The required for interaction with HER2 stretch occupies residues 13-50 (STAIKKKQQDVLGFLEANKIGFEEKDIAANEENRKWMR). The interval 54–71 (PENSRPATGYPLPPQIFN) is required for interaction with PFN1, HER2, and ATG12. The SH3-binding signature appears at 61–67 (TGYPLPP).

It belongs to the SH3BGR family. Monomer. Interacts with PFN1/Profilin-1. Interacts with ERBB2. Interacts with ATG12. Interacts with BECN1. Interacts with translating ribosomes. In terms of tissue distribution, ubiquitous.

It is found in the cytoplasm. The protein resides in the cytosol. It localises to the cell membrane. In terms of biological role, appears to function as an adapter protein that bridges proteins together or proteins with mRNAs. May function as a ubiquitin ligase-substrate adapter. Additionally, associates with translating cytoplasmic ribosomes and may promote the expression of specific mRNAs. This chain is Adapter SH3BGRL, found in Homo sapiens (Human).